Consider the following 90-residue polypeptide: Small ribosomal subunit protein uS17 (90 aa).

This sequence belongs to the universal ribosomal protein uS17 family. In terms of assembly, part of the 30S ribosomal subunit.

In terms of biological role, one of the primary rRNA binding proteins, it binds specifically to the 5'-end of 16S ribosomal RNA. The sequence is that of Small ribosomal subunit protein uS17 from Burkholderia thailandensis (strain ATCC 700388 / DSM 13276 / CCUG 48851 / CIP 106301 / E264).